Reading from the N-terminus, the 804-residue chain is Phenylalanine--tRNA ligase beta subunit (804 aa).

The tRNA-binding domain maps to 40 to 155; that stretch reads GEGIKGVVIG…GDAETGADAL (116 aa). One can recognise a B5 domain in the interval 409-484; it reads IKENVIRLSV…RLYGYDNIPS (76 aa). Positions 462, 468, 471, and 472 each coordinate Mg(2+). The 94-residue stretch at 710 to 803 folds into the FDX-ACB domain; that stretch reads PKYPSVTRDI…LEDKYQAVLR (94 aa).

Belongs to the phenylalanyl-tRNA synthetase beta subunit family. Type 1 subfamily. Tetramer of two alpha and two beta subunits. Requires Mg(2+) as cofactor.

The protein resides in the cytoplasm. It catalyses the reaction tRNA(Phe) + L-phenylalanine + ATP = L-phenylalanyl-tRNA(Phe) + AMP + diphosphate + H(+). The chain is Phenylalanine--tRNA ligase beta subunit from Bacillus licheniformis (strain ATCC 14580 / DSM 13 / JCM 2505 / CCUG 7422 / NBRC 12200 / NCIMB 9375 / NCTC 10341 / NRRL NRS-1264 / Gibson 46).